Reading from the N-terminus, the 331-residue chain is Lipoyl synthase (331 aa).

The [4Fe-4S] cluster site is built by C60, C65, C71, C86, C90, C93, and S301. Positions 72-290 (WSRGTATFML…REEGMQLGFL (219 aa)) constitute a Radical SAM core domain.

The protein belongs to the radical SAM superfamily. Lipoyl synthase family. The cofactor is [4Fe-4S] cluster.

The protein resides in the cytoplasm. It catalyses the reaction [[Fe-S] cluster scaffold protein carrying a second [4Fe-4S](2+) cluster] + N(6)-octanoyl-L-lysyl-[protein] + 2 oxidized [2Fe-2S]-[ferredoxin] + 2 S-adenosyl-L-methionine + 4 H(+) = [[Fe-S] cluster scaffold protein] + N(6)-[(R)-dihydrolipoyl]-L-lysyl-[protein] + 4 Fe(3+) + 2 hydrogen sulfide + 2 5'-deoxyadenosine + 2 L-methionine + 2 reduced [2Fe-2S]-[ferredoxin]. Its pathway is protein modification; protein lipoylation via endogenous pathway; protein N(6)-(lipoyl)lysine from octanoyl-[acyl-carrier-protein]: step 2/2. Its function is as follows. Catalyzes the radical-mediated insertion of two sulfur atoms into the C-6 and C-8 positions of the octanoyl moiety bound to the lipoyl domains of lipoate-dependent enzymes, thereby converting the octanoylated domains into lipoylated derivatives. The polypeptide is Lipoyl synthase (Deinococcus radiodurans (strain ATCC 13939 / DSM 20539 / JCM 16871 / CCUG 27074 / LMG 4051 / NBRC 15346 / NCIMB 9279 / VKM B-1422 / R1)).